Reading from the N-terminus, the 554-residue chain is Phospho-2-dehydro-3-deoxyheptonate aldolase 1, chloroplastic (554 aa).

Residues 1 to 39 (MSLATSSSMAGGAAVVPRSATATTASAFVTMKRRATAVR) constitute a chloroplast transit peptide. A disordered region spans residues 41–70 (VHAAEPSKNPPVGVPSAAKTSSPSVAAPEK).

Belongs to the class-II DAHP synthase family.

The protein localises to the plastid. Its subcellular location is the chloroplast. It catalyses the reaction D-erythrose 4-phosphate + phosphoenolpyruvate + H2O = 7-phospho-2-dehydro-3-deoxy-D-arabino-heptonate + phosphate. Its pathway is metabolic intermediate biosynthesis; chorismate biosynthesis; chorismate from D-erythrose 4-phosphate and phosphoenolpyruvate: step 1/7. The chain is Phospho-2-dehydro-3-deoxyheptonate aldolase 1, chloroplastic (DAHPS1) from Oryza sativa subsp. japonica (Rice).